We begin with the raw amino-acid sequence, 478 residues long: PRAME family member 4 (478 aa).

The LRR 1; degenerate repeat unit spans residues 99-126 (RWKLQVLDLQDVCENFWMVWSEAMAHGC). The LRR 2; degenerate repeat unit spans residues 181–205 (HLCCKKLKILGMPFRNIRSILKMVN). One copy of the LRR 3; degenerate repeat lies at 206 to 232 (LDCIQEVEVNCKWVLPILTQFTPYLGH). Residues 233-268 (MRNLQKLILSHMDVSRYVSPEQKKEIVTQFTTQFLK) form an LRR 4; degenerate repeat. LRR repeat units lie at residues 269 to 294 (LRCL…LSCL), 295 to 326 (KTSL…SQLK), 327 to 347 (TLDL…QILL), 351 to 378 (AATL…ALSR), and 379 to 403 (CFEL…LLSH).

Belongs to the PRAME family.

In Homo sapiens (Human), this protein is PRAME family member 4.